We begin with the raw amino-acid sequence, 426 residues long: Enolase (426 aa).

A (2R)-2-phosphoglycerate-binding site is contributed by Q163. E205 acts as the Proton donor in catalysis. Mg(2+)-binding residues include D242, E283, and D310. (2R)-2-phosphoglycerate contacts are provided by K335, R364, S365, and K386. The active-site Proton acceptor is the K335.

It belongs to the enolase family. Requires Mg(2+) as cofactor.

It localises to the cytoplasm. It is found in the secreted. The protein resides in the cell surface. The catalysed reaction is (2R)-2-phosphoglycerate = phosphoenolpyruvate + H2O. It participates in carbohydrate degradation; glycolysis; pyruvate from D-glyceraldehyde 3-phosphate: step 4/5. Its function is as follows. Catalyzes the reversible conversion of 2-phosphoglycerate (2-PG) into phosphoenolpyruvate (PEP). It is essential for the degradation of carbohydrates via glycolysis. This Arthrobacter sp. (strain FB24) protein is Enolase.